We begin with the raw amino-acid sequence, 268 residues long: Pantothenate synthetase (268 aa).

18–25 (MGYLHEGH) contributes to the ATP binding site. H25 (proton donor) is an active-site residue. Position 49 (Q49) interacts with (R)-pantoate. Q49 is a binding site for beta-alanine. 135–138 (GQKD) serves as a coordination point for ATP. Residue Q141 participates in (R)-pantoate binding. ATP-binding positions include I164 and 172–175 (LSSR).

Belongs to the pantothenate synthetase family. In terms of assembly, homodimer.

It localises to the cytoplasm. It catalyses the reaction (R)-pantoate + beta-alanine + ATP = (R)-pantothenate + AMP + diphosphate + H(+). The protein operates within cofactor biosynthesis; (R)-pantothenate biosynthesis; (R)-pantothenate from (R)-pantoate and beta-alanine: step 1/1. In terms of biological role, catalyzes the condensation of pantoate with beta-alanine in an ATP-dependent reaction via a pantoyl-adenylate intermediate. The chain is Pantothenate synthetase from Dehalococcoides mccartyi (strain CBDB1).